Here is a 35-residue protein sequence, read N- to C-terminus: MEALVYTFLLVSTLGIIFFAIFFREPPKVPTKKVK.

A helical membrane pass occupies residues 3–23; it reads ALVYTFLLVSTLGIIFFAIFF.

Belongs to the PsbT family. In terms of assembly, PSII is composed of 1 copy each of membrane proteins PsbA, PsbB, PsbC, PsbD, PsbE, PsbF, PsbH, PsbI, PsbJ, PsbK, PsbL, PsbM, PsbT, PsbY, PsbZ, Psb30/Ycf12, at least 3 peripheral proteins of the oxygen-evolving complex and a large number of cofactors. It forms dimeric complexes.

Its subcellular location is the plastid. It is found in the chloroplast thylakoid membrane. Found at the monomer-monomer interface of the photosystem II (PS II) dimer, plays a role in assembly and dimerization of PSII. PSII is a light-driven water plastoquinone oxidoreductase, using light energy to abstract electrons from H(2)O, generating a proton gradient subsequently used for ATP formation. This chain is Photosystem II reaction center protein T, found in Nelumbo lutea (American lotus).